The following is a 376-amino-acid chain: Putative clathrin assembly protein At1g25240 (376 aa).

An ENTH domain is found at 25–156 (KTSFRNPDLD…FFLSDQIRRR (132 aa)).

It localises to the membrane. The protein localises to the clathrin-coated pit. It is found in the golgi apparatus. Its subcellular location is the cytoplasmic vesicle. The protein resides in the clathrin-coated vesicle. The chain is Putative clathrin assembly protein At1g25240 from Arabidopsis thaliana (Mouse-ear cress).